Here is a 596-residue protein sequence, read N- to C-terminus: Elongation factor 4 (596 aa).

Residues 2–184 form the tr-type G domain; the sequence is KNIRNFSIIA…TIVKNIPSPA (183 aa). GTP-binding positions include 14-19 and 131-134; these read DHGKST and NKID.

Belongs to the TRAFAC class translation factor GTPase superfamily. Classic translation factor GTPase family. LepA subfamily.

Its subcellular location is the cell inner membrane. It carries out the reaction GTP + H2O = GDP + phosphate + H(+). Its function is as follows. Required for accurate and efficient protein synthesis under certain stress conditions. May act as a fidelity factor of the translation reaction, by catalyzing a one-codon backward translocation of tRNAs on improperly translocated ribosomes. Back-translocation proceeds from a post-translocation (POST) complex to a pre-translocation (PRE) complex, thus giving elongation factor G a second chance to translocate the tRNAs correctly. Binds to ribosomes in a GTP-dependent manner. The chain is Elongation factor 4 from Colwellia psychrerythraea (strain 34H / ATCC BAA-681) (Vibrio psychroerythus).